The following is a 49-amino-acid chain: Beta-toxin Rc1 (49 aa).

3 disulfide bridges follow: C15–C31, C22–C40, and C26–C42.

This sequence belongs to the long (4 C-C) scorpion toxin superfamily. Sodium channel inhibitor family. Beta subfamily. In terms of tissue distribution, expressed by the venom gland.

It is found in the secreted. Functionally, beta toxins bind voltage-independently at site-4 of sodium channels (Nav) and shift the voltage of activation toward more negative potentials thereby affecting sodium channel activation and promoting spontaneous and repetitive firing. This toxin acts on X.laevis Nav1.6/SCN8A and insect BgNav1 channels, and also displays a small but significant effect on X.laevis Nav1.4/SCN4A channels. In mice induces nociception (licking and lifting behaviors) during the first 15 minutes after injection, and increases the release of TNF-alpha in J774.1 cells. The protein is Beta-toxin Rc1 of Rhopalurus crassicauda (Scorpion).